We begin with the raw amino-acid sequence, 384 residues long: Deoxyguanosinetriphosphate triphosphohydrolase-like protein (384 aa).

The HD domain maps to 63-199; that stretch reads RLTHSLEVAT…ASLADDISYI (137 aa).

The protein belongs to the dGTPase family. Type 2 subfamily.

The chain is Deoxyguanosinetriphosphate triphosphohydrolase-like protein from Rickettsia typhi (strain ATCC VR-144 / Wilmington).